Reading from the N-terminus, the 403-residue chain is Signal-transducing adaptor protein 2 (403 aa).

Positions 18-130 (PSHYYESFLE…VPTDLTLLPG (113 aa)) constitute a PH domain. Tyrosine 22 carries the phosphotyrosine; by SRC modification. Residues 133-248 (YMMSEVLAKE…KALVPFLLDE (116 aa)) enclose the SH2 domain. Tyrosine 250 bears the Phosphotyrosine; by PTK6 mark. The segment at 270–308 (APSAPGPGPAPCTGGPKPLSPASSQDKLPPLPPLPNQEE) is disordered. Tyrosine 310 carries the phosphotyrosine modification. Tyrosine 322 carries the phosphotyrosine; by SRC modification. The tract at residues 331-374 (SWPVILKPKKLPKPPAKLPKPPVGPKPEPKVFNGGLGRKLPVSS) is disordered. Over residues 343-356 (KPPAKLPKPPVGPK) the composition is skewed to pro residues. A coiled-coil region spans residues 382–402 (AGLADMTAELQKKLEKRRALE).

As to quaternary structure, interacts with PTK6 and CSF1R. Phosphorylated on tyrosine. Tyr-250 may be important for interaction with kinases. Phosphorylated by PTK6 at Tyr-250 modulates PTK6-mediated STAT3 activation. Tyr-22 and Tyr-322 appears to be phosphorylated by SRC. As to expression, widely expressed.

It is found in the cytoplasm. Functionally, substrate of protein kinase PTK6. May play a regulatory role in the acute-phase response in systemic inflammation and may modulate STAT3 activity. This chain is Signal-transducing adaptor protein 2 (STAP2), found in Homo sapiens (Human).